The primary structure comprises 356 residues: DNA polymerase IV (356 aa).

A UmuC domain is found at 7–188; it reads IIHIDMDCFY…LPLKKIPRVG (182 aa). Residues aspartate 11 and aspartate 106 each coordinate Mg(2+). Residue glutamate 107 is part of the active site.

The protein belongs to the DNA polymerase type-Y family. In terms of assembly, monomer. It depends on Mg(2+) as a cofactor.

It is found in the cytoplasm. The catalysed reaction is DNA(n) + a 2'-deoxyribonucleoside 5'-triphosphate = DNA(n+1) + diphosphate. In terms of biological role, poorly processive, error-prone DNA polymerase involved in untargeted mutagenesis. Copies undamaged DNA at stalled replication forks, which arise in vivo from mismatched or misaligned primer ends. These misaligned primers can be extended by PolIV. Exhibits no 3'-5' exonuclease (proofreading) activity. May be involved in translesional synthesis, in conjunction with the beta clamp from PolIII. The protein is DNA polymerase IV of Actinobacillus pleuropneumoniae serotype 5b (strain L20).